The chain runs to 300 residues: MSSNQAEGLIIAAHGRHYTVELADGSLRQCFPRGKKNGPAVGDRVRITPQGRDEGAIEAVLPRRNLLFRSDEMRVKQFAANVDQLLIVVAVEPTFADDLTGRSLAGAWSADIEPVIVLNKIDLPNGLDAARARLEPLRRLGVPVIELSAQDHAMVHERLAPRLAGRTSLLLGQSGMGKSTLLNTLVPHAQAATREYSAALDMGRHTTTSTRLYHLPEPGGDLIDSPGFQAFGLQHLNGEQILRGFPEFAPHIEHCRFYNCTHRHEPGCGVLAALQAGQIDAGRYALYLRILDENAAARPY.

Positions 69–231 (RSDEMRVKQF…LIDSPGFQAF (163 aa)) constitute a CP-type G domain. GTP contacts are provided by residues 119–122 (NKID) and 172–180 (GQSGMGKST). Residues Cys255, Cys260, His262, and Cys268 each coordinate Zn(2+).

This sequence belongs to the TRAFAC class YlqF/YawG GTPase family. RsgA subfamily. Monomer. Associates with 30S ribosomal subunit, binds 16S rRNA. Zn(2+) serves as cofactor.

Its subcellular location is the cytoplasm. In terms of biological role, one of several proteins that assist in the late maturation steps of the functional core of the 30S ribosomal subunit. Helps release RbfA from mature subunits. May play a role in the assembly of ribosomal proteins into the subunit. Circularly permuted GTPase that catalyzes slow GTP hydrolysis, GTPase activity is stimulated by the 30S ribosomal subunit. This Bordetella bronchiseptica (strain ATCC BAA-588 / NCTC 13252 / RB50) (Alcaligenes bronchisepticus) protein is Small ribosomal subunit biogenesis GTPase RsgA.